The following is a 1437-amino-acid chain: Protein SUPPRESSOR OF npr1-1, CONSTITUTIVE 1 (1437 aa).

At Met1 the chain carries N-acetylmethionine. Residues Arg19–Thr182 form the TIR domain. Residue Arg28–Arg33 coordinates NAD(+). Residue Glu93 is part of the active site. 23 LRR repeats span residues Met554–Pro576, Leu577–Ala598, Tyr600–Leu621, Gly622–Ile645, Leu647–Ala668, Lys670–Leu691, Glu692–Cys715, Leu781–Thr805, Leu807–Leu828, His829–Leu851, Ser852–Ile875, Trp877–Leu895, Arg897–Leu918, Ser919–Ser939, Glu940–Thr962, Leu964–Leu985, Ser1009–Ser1029, Thr1030–Leu1052, Arg1054–Leu1075, Ser1076–Ser1096, Thr1097–Arg1121, Thr1123–Leu1143, and Leu1161–Tyr1185.

This sequence belongs to the disease resistance TIR-NB-LRR family. Homodimer. Interacts (via TIR domain) with TPR1. Interacts with EDS1. Interacts with SRFR1. Interacts with HSP90-3. Binds to MORC1/CRT1. Interacts with TRAF1B. In terms of processing, met-1 is specifically acetylated by N-terminal acetyltransferase complex A (NatA). The NatA-mediated acetylation serves as a degradation signal. Met-1 is specifically acetylated by N-terminal acetyltransferase complex B (NatB). The NatB-mediated acetylation stabilizes SNC1. As to expression, expressed in guard cells and epidermal cells, but not detected in mesophyll cells.

It localises to the cytoplasm. The protein localises to the microsome. It is found in the nucleus. It carries out the reaction NAD(+) + H2O = ADP-D-ribose + nicotinamide + H(+). Functionally, disease resistance protein of the TIR-NB-LRR-type. Part of the RPP5 locus that contains a cluster of several paralogous disease resistance (R) genes. Resistance proteins guard the plant against pathogens that contain an appropriate avirulence protein via an indirect interaction with this avirulence protein. That triggers a defense system including the hypersensitive response, which restricts the pathogen growth. Probably acts as a NAD(+) hydrolase (NADase): in response to activation, catalyzes cleavage of NAD(+) into ADP-D-ribose (ADPR) and nicotinamide; NAD(+) cleavage triggering a defense system that promotes cell death. Expression regulated by MOS1 at chromatin level. Nuclear localization of SNC1 is essential for its activity. ABA deficiency can rescue high-temperature inhibition of SNC1-mediated defense responses. This Arabidopsis thaliana (Mouse-ear cress) protein is Protein SUPPRESSOR OF npr1-1, CONSTITUTIVE 1.